Here is a 236-residue protein sequence, read N- to C-terminus: H2HPP isomerase (236 aa).

2 Cupin type-2 domains span residues 40-106 (YVPP…AIDI) and 151-215 (NIPG…SKSV). A divalent metal cation is bound by residues His50, His52, Gln56, His91, His162, His164, Gln168, and His202. Tyr223 provides a ligand contact to substrate.

In terms of assembly, monomer. Fe(2+) serves as cofactor. Co(2+) is required as a cofactor.

Its subcellular location is the cytoplasm. It carries out the reaction 3-[(4R)-4-hydroxycyclohexa-1,5-dien-1-yl]-2-oxopropanoate = 3-[(1E,4R)-4-hydroxycyclohex-2-en-1-ylidene]pyruvate. It functions in the pathway antibiotic biosynthesis; bacilysin biosynthesis. Part of the bacABCDEF operon responsible for the biosynthesis of the nonribosomally synthesized dipeptide antibiotic bacilysin, composed of L-alanine and L-anticapsin. Bacilysin is an irreversible inactivator of the glutaminase domain of glucosamine synthetase. BacB catalyzes the allylic isomerization of the endocyclic-delta(4),delta(8)-7R-dihydro-hydroxyphenylpyruvate (en-H2HPP) to generate a mixture of 3E,7R- and 3Z, 7R-olefins of the exocyclic-delta(3),delta(5)-dihydro-hydroxyphenylpyruvate (ex-H2HPP). This Bacillus amyloliquefaciens (Bacillus velezensis) protein is H2HPP isomerase.